Consider the following 85-residue polypeptide: uncharacterized protein (85 aa).

An N-terminal signal peptide occupies residues 1–35 (MIEDPSKKISLWQKWINVDPKKRILFSLGLFALSA).

Its subcellular location is the secreted. This is an uncharacterized protein from Dictyostelium discoideum (Social amoeba).